Consider the following 537-residue polypeptide: MATGSTELLIGWCIFGVLLLAILAFCWVYVRKYQSHQESEVISTITAISSLAIALITSALLPVDIFLVSFMKNHNGTFKDWAENNDTRIQIENTVLIGYYTLYSIILFCVFLWIPFVYFYYEEKDDTDGSHCSQIGSALKYTSGFVLVCSCLLLIGAFAPLDIPSKANATELDKIKLLFQNLGSSNGLAALSFSISSLTLIGMLAAITYTAYGMSALPLNLIKGKRNAHYERLENSEDIEEVEQQVENIKSKCKDGRPLSSKDRQALYKLQEKLRTLKRKDRHLEHHENNCWTKCCLVMRPFKIVWGILFILVALLFIVSLFLSNLDKALHSAGINTGFIIFGTNLTNPLNILLPVLQTVFPLDYIFITTITMYFIFTSMAGIRNMGIWFFWIRLYKIRRRRTRPQALLFLCMILLLIVLHTSYMIYSLAPQYVMYGSQKYLWENNSTQETAIGNSSALVLKDCDASAPEDQCTVTRTYLFLHKFWFFSSIYYFGNWAFIVVFVIGLIVSCCKGKKSVIEGEVEDDDSDLSDDEDHP.

At 1 to 7 the chain is on the extracellular side; that stretch reads MATGSTE. The helical transmembrane segment at 8-28 threads the bilayer; it reads LLIGWCIFGVLLLAILAFCWV. The Cytoplasmic segment spans residues 29–47; it reads YVRKYQSHQESEVISTITA. A helical transmembrane segment spans residues 48–68; that stretch reads ISSLAIALITSALLPVDIFLV. The Extracellular portion of the chain corresponds to 69 to 98; the sequence is SFMKNHNGTFKDWAENNDTRIQIENTVLIG. Residues asparagine 75 and asparagine 85 are each glycosylated (N-linked (GlcNAc...) asparagine). A helical membrane pass occupies residues 99–119; sequence YYTLYSIILFCVFLWIPFVYF. Residues 120–142 lie on the Cytoplasmic side of the membrane; sequence YYEEKDDTDGSHCSQIGSALKYT. A helical membrane pass occupies residues 143-163; the sequence is SGFVLVCSCLLLIGAFAPLDI. At 164-186 the chain is on the extracellular side; the sequence is PSKANATELDKIKLLFQNLGSSN. Asparagine 168 carries N-linked (GlcNAc...) asparagine glycosylation. The helical transmembrane segment at 187-207 threads the bilayer; that stretch reads GLAALSFSISSLTLIGMLAAI. The Cytoplasmic segment spans residues 208–303; the sequence is TYTAYGMSAL…KCCLVMRPFK (96 aa). A helical transmembrane segment spans residues 304-324; the sequence is IVWGILFILVALLFIVSLFLS. Topologically, residues 325-362 are extracellular; it reads NLDKALHSAGINTGFIIFGTNLTNPLNILLPVLQTVFP. Asparagine 345 is a glycosylation site (N-linked (GlcNAc...) asparagine). The chain crosses the membrane as a helical span at residues 363–383; that stretch reads LDYIFITTITMYFIFTSMAGI. The Cytoplasmic portion of the chain corresponds to 384-406; it reads RNMGIWFFWIRLYKIRRRRTRPQ. A helical transmembrane segment spans residues 407 to 427; that stretch reads ALLFLCMILLLIVLHTSYMIY. The Extracellular portion of the chain corresponds to 428-484; that stretch reads SLAPQYVMYGSQKYLWENNSTQETAIGNSSALVLKDCDASAPEDQCTVTRTYLFLHK. 3 N-linked (GlcNAc...) asparagine glycosylation sites follow: asparagine 445, asparagine 446, and asparagine 455. Residues 485 to 505 traverse the membrane as a helical segment; it reads FWFFSSIYYFGNWAFIVVFVI. The Cytoplasmic segment spans residues 506 to 537; it reads GLIVSCCKGKKSVIEGEVEDDDSDLSDDEDHP.

The protein belongs to the LIMR family. LMBRD1 subfamily.

It is found in the endoplasmic reticulum membrane. The protein localises to the lysosome membrane. It localises to the cell membrane. Functionally, lysosomal membrane chaperone required to export cobalamin (vitamin B12) from the lysosome to the cytosol, allowing its conversion to cofactors. Targets ABCD4 transporter from the endoplasmic reticulum to the lysosome. Then forms a complex with lysosomal ABCD4 and cytoplasmic MMACHC to transport cobalamin across the lysosomal membrane. May play a role in mediating and regulating the internalization of the insulin receptor. In Xenopus laevis (African clawed frog), this protein is Lysosomal cobalamin transport escort protein LMBD1 (lmbrd1).